The chain runs to 159 residues: Keratin-associated protein 9-8 (159 aa).

Repeat copies occupy residues 8–12, 13–17, 32–36, 37–41, 46–50, 51–55, 56–60, 65–69, 70–74, 75–79, 80–84, 129–133, 134–138, 139–142, and 153–157. Residues 8–157 form a 15 X 5 AA repeats of C-C-[RQVSGE]-[SPSNQ]-[TASPI] region; that stretch reads CCQPTCCRTT…TCVSSCCQPS (150 aa).

Belongs to the KRTAP type 9 family. As to quaternary structure, interacts with hair keratins.

Functionally, in the hair cortex, hair keratin intermediate filaments are embedded in an interfilamentous matrix, consisting of hair keratin-associated proteins (KRTAP), which are essential for the formation of a rigid and resistant hair shaft through their extensive disulfide bond cross-linking with abundant cysteine residues of hair keratins. The matrix proteins include the high-sulfur and high-glycine-tyrosine keratins. The sequence is that of Keratin-associated protein 9-8 (KRTAP9-8) from Homo sapiens (Human).